Consider the following 132-residue polypeptide: Glycine cleavage system H protein (132 aa).

A Lipoyl-binding domain is found at 24–106; sequence TVRVGITDFA…YGAGWLLDVQ (83 aa). Lys65 carries the N6-lipoyllysine modification.

It belongs to the GcvH family. In terms of assembly, the glycine cleavage system is composed of four proteins: P, T, L and H. (R)-lipoate is required as a cofactor.

In terms of biological role, the glycine cleavage system catalyzes the degradation of glycine. The H protein shuttles the methylamine group of glycine from the P protein to the T protein. The polypeptide is Glycine cleavage system H protein (Mycobacterium avium (strain 104)).